A 281-amino-acid chain; its full sequence is ATP synthase subunit a (281 aa).

7 helical membrane-spanning segments follow: residues K56 to F76, L117 to A137, I144 to F164, K181 to I201, F215 to V235, I237 to I257, and A259 to E279.

Belongs to the ATPase A chain family. In terms of assembly, F-type ATPases have 2 components, CF(1) - the catalytic core - and CF(0) - the membrane proton channel. CF(1) has five subunits: alpha(3), beta(3), gamma(1), delta(1), epsilon(1). CF(0) has three main subunits: a(1), b(2) and c(9-12). The alpha and beta chains form an alternating ring which encloses part of the gamma chain. CF(1) is attached to CF(0) by a central stalk formed by the gamma and epsilon chains, while a peripheral stalk is formed by the delta and b chains.

It localises to the cell membrane. Key component of the proton channel; it plays a direct role in the translocation of protons across the membrane. This is ATP synthase subunit a from Streptomyces lividans.